We begin with the raw amino-acid sequence, 692 residues long: MARQVSLEKTRNIGIMAHIDAGKTTTTERILYYTGVTHKIGEVHEGAATMDWMEQEQERGITITSAATTCFWGDHRVNIIDTPGHVDFTIEVERSLRVLDGAVAVFCSVGGVEPQSETVWRQADKYRVPRIAFINKMDRVGADFFRGVGMIRDRLKANPVPIQLPIGAEDTYRGVVDLVEMKAIIWDEESLGAKYHEAEIPADLAEMAQEYREKLIEEIATFDDALMEKYLGGEELTTDEIKAAVRKATIDIQICPVICGSAFKNKGVQNLLDSVVAYLPSPLDIPAITGIDAKSGEEITRKASDDEPFSALAFKIMTDPFVGQLCFFRVYSGVLNSGSYVYNSTKEKKERIGRLLKMHANKREEIKEVYAGDIAAAVGLKYTTTGDTLCPEDSPVVLESIEFPEPVIAIAIEPKTKADQEKLGISLQKLASEDPSFRVRTDEETGQTIISGMGELHLEIIVDRLMREFKVEANVGKPQVAYRETVTKKVKVEGKFVRQSGGRGQYGHVWIELEPQEAGKGYEFVDAIKGGVVPREYIPAVDKGIQEAMETGVLAGYPTVDFKVALVDGSYHEVDSSEMAFKIAGSMAFKEAAAKAGPVLLEPIMSVEVVVPEEYMGDVIGDLNSRRGRIMGMEGRAGAQVVSAMVPLAQMFGYATDLRSATQGRATYTMTFDHYEQVPKSVSEEIVAKVKG.

Positions 8 to 283 (EKTRNIGIMA…SVVAYLPSPL (276 aa)) constitute a tr-type G domain. GTP contacts are provided by residues 17–24 (AHIDAGKT), 81–85 (DTPGH), and 135–138 (NKMD).

It belongs to the TRAFAC class translation factor GTPase superfamily. Classic translation factor GTPase family. EF-G/EF-2 subfamily.

The protein localises to the cytoplasm. Functionally, catalyzes the GTP-dependent ribosomal translocation step during translation elongation. During this step, the ribosome changes from the pre-translocational (PRE) to the post-translocational (POST) state as the newly formed A-site-bound peptidyl-tRNA and P-site-bound deacylated tRNA move to the P and E sites, respectively. Catalyzes the coordinated movement of the two tRNA molecules, the mRNA and conformational changes in the ribosome. In Geobacter sulfurreducens (strain ATCC 51573 / DSM 12127 / PCA), this protein is Elongation factor G 2.